The primary structure comprises 575 residues: Beta-amylase (575 aa).

A signal peptide spans 1–36 (MLHSQKRIWKKIGLCLLSFILGITVFTGSFGSKAEA). Residue Asp77 participates in substrate binding. The Ca(2+) site is built by Glu84 and Asp88. The substrate site is built by His117 and Asp125. A disulfide bridge links Cys119 with Cys127. Ca(2+) is bound at residue Glu171. Glu199 acts as the Proton donor in catalysis. Positions 315, 320, and 358 each coordinate substrate. Glu395 (proton acceptor) is an active-site residue. Residues 396-397 (NA) and Arg424 contribute to the substrate site.

The protein belongs to the glycosyl hydrolase 14 family. As to quaternary structure, monomer. The cofactor is Ca(2+).

It catalyses the reaction Hydrolysis of (1-&gt;4)-alpha-D-glucosidic linkages in polysaccharides so as to remove successive maltose units from the non-reducing ends of the chains.. In Niallia circulans (Bacillus circulans), this protein is Beta-amylase.